Here is a 416-residue protein sequence, read N- to C-terminus: Ena/VASP-like protein (416 aa).

The WH1 domain occupies 1–112 (MSEQSICQAR…NAMLFALNIM (112 aa)). The segment covering 114–129 (SQEGGPSSQRQVQNGP) has biased composition (polar residues). 2 disordered regions span residues 114 to 133 (SQEG…SPDE) and 141 to 369 (VMEQ…PAGS). Ser130 is subject to Phosphoserine. Residues 141 to 157 (VMEQHQQQRQESLERRT) are compositionally biased toward basic and acidic residues. Positions 169–180 (PSSAASAPVSCS) are enriched in low complexity. Over residues 181–206 (GPPPPPPPPVPPPPTGATPPPPPPLP) the composition is skewed to pro residues. Residues 222-242 (GLAAAIAGAKLRRVQRPEDAS) are EVH2 block A. The tract at residues 222 to 413 (GLAAAIAGAK…DAIRQELSGI (192 aa)) is EVH2. The KLKR motif lies at 231 to 234 (KLRR). Over residues 242–253 (SGGSSPSGTSKS) the composition is skewed to low complexity. Phosphoserine occurs at positions 246 and 259. The interval 265 to 282 (GGLMEEMNKLLAKRRKAA) is EVH2 block B. Residues 299–320 (EDPSTSPSPGTRAASQPPNSSE) show a composition bias toward polar residues. Phosphoserine is present on residues Ser304, Ser306, Ser329, Ser331, Ser341, Ser349, Ser354, and Ser369. A compositionally biased stretch (basic and acidic residues) spans 321 to 331 (AGRKPWERSNS). Residues 342–362 (RTPSVAKSPEAKSPLQSQPHS) form a required for interaction with ZDHHC17 region. The segment at 379–413 (DLDRMKQEILEEVVRELHKVKEEIIDAIRQELSGI) is EVH2 block C.

Belongs to the Ena/VASP family. As to quaternary structure, homotetramer. Binds to the SH3 domains of ABL1, LYN and SRC. Also binds to profilin, with preference for isoform IIa of PFN2, and the WW domain of APBB1/FE65. Binds to SEMA6A. Interacts, via the Pro-rich region, with the C-terminal SH3 domain of DNMBP. Interacts with RAPH1. Binds, via the EVH1 domain, the Pro-rich domain of Listeria monocytogenes actA. Binds, via the EVH1 domain, the Pro-rich domain of ZYX. Interacts with FYB1. Interacts with ZDHHC17. Post-translationally, phosphorylated by PKA; phosphorylation abolishes binding to SH3 domains of ABL and SRC.

The protein resides in the cytoplasm. Its subcellular location is the cytoskeleton. The protein localises to the stress fiber. It is found in the cell projection. It localises to the lamellipodium. Ena/VASP proteins are actin-associated proteins involved in a range of processes dependent on cytoskeleton remodeling and cell polarity such as axon guidance and lamellipodial and filopodial dynamics in migrating cells. EVL enhances actin nucleation and polymerization. The protein is Ena/VASP-like protein (EVL) of Homo sapiens (Human).